Consider the following 449-residue polypeptide: MKFSSGILSLAVAASVQSVQASYHAHGHAHHHRVLNKRADPDVVTIPGPKVYAFILNGSEMSKEQVCAGIRDGRLDWSGQNHDELCGFPVGMQKGSPPACPAPSYVPSPPAAPSSPPAAPQPPSKSPETPEEPKKPEEPKKPEGPKKPEGPKTPSPKKPDGPQHPQTPTGGEGVNRPFPDGEIDCGDFPSKYGAVPVDYLGLGGYTGIQHTTLVGEVFGTIRTAIAGESCTDGAMCSYACPPGYQKSQWPEQQGSTGESVGGLACRNGKLYLTNRKLSTRLCISGVGGVHIKSTISVEISICRTDYPGTESETVPVPLPPHGHLPLTCPQAETYYFWQGKSTSAQYYVNPPGYGPAKACQWGHAGLPIGNWAPVNIGVGEKGGVKWLSMFPNRPTTTAILHMTIEIVGEGLSGKCKHKDGKYYTDTGVNEDGCTVSVLHGEATFVFSYD.

Residues 1–21 form the signal peptide; it reads MKFSSGILSLAVAASVQSVQA. The N-linked (GlcNAc...) asparagine glycan is linked to N57. The segment at 96–185 is disordered; that stretch reads SPPACPAPSY…RPFPDGEIDC (90 aa). Residues 98–125 show a composition bias toward pro residues; sequence PACPAPSYVPSPPAAPSSPPAAPQPPSK. A compositionally biased stretch (basic and acidic residues) spans 131 to 150; the sequence is EEPKKPEEPKKPEGPKKPEG.

The protein belongs to the SUN family.

Its subcellular location is the secreted. The protein resides in the cell wall. Its function is as follows. Cell surface beta-glucosidase involved in cytokinesis, cell wall biogenesis, adhesion to host tissue; thus playing an important role in the host-pathogen interaction. Has hydrolytic activity on linear (1-&gt;3)-beta-D-glucans such as laminaribiose and other laminarioligosaccharides. This is Probable secreted beta-glucosidase ARB_04747 from Arthroderma benhamiae (strain ATCC MYA-4681 / CBS 112371) (Trichophyton mentagrophytes).